Here is a 155-residue protein sequence, read N- to C-terminus: Deoxyuridine 5'-triphosphate nucleotidohydrolase (155 aa).

Substrate-binding positions include 74–76 (RSG), Asn-87, and 91–93 (LID).

It belongs to the dUTPase family. It depends on Mg(2+) as a cofactor.

The catalysed reaction is dUTP + H2O = dUMP + diphosphate + H(+). It functions in the pathway pyrimidine metabolism; dUMP biosynthesis; dUMP from dCTP (dUTP route): step 2/2. This enzyme is involved in nucleotide metabolism: it produces dUMP, the immediate precursor of thymidine nucleotides and it decreases the intracellular concentration of dUTP so that uracil cannot be incorporated into DNA. The chain is Deoxyuridine 5'-triphosphate nucleotidohydrolase from Xanthomonas oryzae pv. oryzae (strain MAFF 311018).